Reading from the N-terminus, the 463-residue chain is A-type ATP synthase subunit B (463 aa).

This sequence belongs to the ATPase alpha/beta chains family. In terms of assembly, has multiple subunits with at least A(3), B(3), C, D, E, F, H, I and proteolipid K(x).

It localises to the cell membrane. In terms of biological role, component of the A-type ATP synthase that produces ATP from ADP in the presence of a proton gradient across the membrane. The B chain is a regulatory subunit. The sequence is that of A-type ATP synthase subunit B from Aeropyrum pernix (strain ATCC 700893 / DSM 11879 / JCM 9820 / NBRC 100138 / K1).